A 275-amino-acid polypeptide reads, in one-letter code: Large ribosomal subunit protein uL2c (275 aa).

2 disordered regions span residues 1–28 (MGIR…TKSK) and 227–251 (PCDH…TPWG). A compositionally biased stretch (polar residues) spans 10–22 (TPGTRNRSSSDFS).

The protein belongs to the universal ribosomal protein uL2 family. As to quaternary structure, part of the 50S ribosomal subunit.

It localises to the plastid. The protein localises to the chloroplast. The polypeptide is Large ribosomal subunit protein uL2c (rpl2) (Rhodomonas salina (Cryptomonas salina)).